Here is a 231-residue protein sequence, read N- to C-terminus: tRNA (guanine-N(7)-)-methyltransferase (231 aa).

S-adenosyl-L-methionine-binding residues include Glu62, Glu87, Asp114, and Asp137. Asp137 is a catalytic residue. Substrate is bound by residues Lys141, Asp173, and 210-213; that span reads TKFE.

This sequence belongs to the class I-like SAM-binding methyltransferase superfamily. TrmB family.

The enzyme catalyses guanosine(46) in tRNA + S-adenosyl-L-methionine = N(7)-methylguanosine(46) in tRNA + S-adenosyl-L-homocysteine. Its pathway is tRNA modification; N(7)-methylguanine-tRNA biosynthesis. In terms of biological role, catalyzes the formation of N(7)-methylguanine at position 46 (m7G46) in tRNA. The sequence is that of tRNA (guanine-N(7)-)-methyltransferase from Methylococcus capsulatus (strain ATCC 33009 / NCIMB 11132 / Bath).